The sequence spans 569 residues: Adenine deaminase 1 (569 aa).

The protein belongs to the metallo-dependent hydrolases superfamily. Adenine deaminase family. Mn(2+) serves as cofactor.

It carries out the reaction adenine + H2O + H(+) = hypoxanthine + NH4(+). In Rhizobium johnstonii (strain DSM 114642 / LMG 32736 / 3841) (Rhizobium leguminosarum bv. viciae), this protein is Adenine deaminase 1.